A 313-amino-acid chain; its full sequence is MLNRSKMLQEIDNLLTSEGYKTSNIYDQGSFDLVARKNLLILLLKTFLNIDSINEANAHEMKQLANIFLASPIIIGEKSRNGILEEGVIYERYDIPAISFETLKNMILYKEYPEILADRGGYFVKVDGNVIKQYREEYSLSLKDLADLAHVSRATMYKYENEIVRANTETAMILEEILNTKVTLDIDLLKPTISEDIEYSNVEGADDLSKLGYGILSTNKSPFDAVAKMKSSKDKSSLLTNVEKNRSEKTLKRMAIPLKDLSMITSSEPVFIINNDKIKDSLGTIPVIKSWELKEFENPSELLKIIRERKDNM.

The HTH cro/C1-type domain maps to 131-189 (IKQYREEYSLSLKDLADLAHVSRATMYKYENEIVRANTETAMILEEILNTKVTLDIDLL). Positions 142–161 (LKDLADLAHVSRATMYKYEN) form a DNA-binding region, H-T-H motif.

The protein is Putative HTH-type transcriptional regulatory protein Msm_0453 of Methanobrevibacter smithii (strain ATCC 35061 / DSM 861 / OCM 144 / PS).